A 500-amino-acid polypeptide reads, in one-letter code: Probable cytosol aminopeptidase (500 aa).

2 residues coordinate Mn(2+): K265 and D270. K277 is a catalytic residue. The Mn(2+) site is built by D288, D347, and E349. R351 is a catalytic residue.

The protein belongs to the peptidase M17 family. It depends on Mn(2+) as a cofactor.

It localises to the cytoplasm. The catalysed reaction is Release of an N-terminal amino acid, Xaa-|-Yaa-, in which Xaa is preferably Leu, but may be other amino acids including Pro although not Arg or Lys, and Yaa may be Pro. Amino acid amides and methyl esters are also readily hydrolyzed, but rates on arylamides are exceedingly low.. The enzyme catalyses Release of an N-terminal amino acid, preferentially leucine, but not glutamic or aspartic acids.. In terms of biological role, presumably involved in the processing and regular turnover of intracellular proteins. Catalyzes the removal of unsubstituted N-terminal amino acids from various peptides. This Rickettsia rickettsii (strain Iowa) protein is Probable cytosol aminopeptidase.